We begin with the raw amino-acid sequence, 669 residues long: Zinc finger CCCH domain-containing protein 17 (669 aa).

A compositionally biased stretch (low complexity) spans 1–11 (MFAPATQPQQQ). A disordered region spans residues 1 to 23 (MFAPATQPQQQHEQKKQSETVSS). 3 consecutive C3H1-type zinc fingers follow at residues 34-58 (DCVY…HSEY), 60-86 (RMNP…HPPL), and 114-141 (AKQP…HTPN). Disordered regions lie at residues 150–175 (PVEA…EKKL), 285–306 (VEDR…PDFS), 376–589 (GMRL…VMEE), and 642–669 (EEGE…EMLS). Basic and acidic residues-rich tracts occupy residues 164–175 (KPIENNTEEKKL), 285–299 (VEDR…RGNS), 392–406 (SMDR…DTPR), 420–464 (KLRE…EENH), 478–499 (RRRE…ESKP), and 547–579 (NNKD…PKAE). 2 stretches are compositionally biased toward acidic residues: residues 580 to 589 (VEEEGTVMEE) and 642 to 659 (EEGE…GEED). The span at 660–669 (IEKKTVEMLS) shows a compositional bias: basic and acidic residues.

In Arabidopsis thaliana (Mouse-ear cress), this protein is Zinc finger CCCH domain-containing protein 17.